Consider the following 480-residue polypeptide: Adenosylhomocysteinase (480 aa).

Threonine 63, aspartate 142, and glutamate 203 together coordinate substrate. Residue 204 to 206 (TTT) participates in NAD(+) binding. 2 residues coordinate substrate: lysine 233 and aspartate 237. NAD(+)-binding positions include asparagine 238, 267 to 272 (GYGDVG), glutamate 290, asparagine 325, 346 to 348 (IGH), and asparagine 394.

Belongs to the adenosylhomocysteinase family. NAD(+) is required as a cofactor.

The protein localises to the cytoplasm. It catalyses the reaction S-adenosyl-L-homocysteine + H2O = L-homocysteine + adenosine. It participates in amino-acid biosynthesis; L-homocysteine biosynthesis; L-homocysteine from S-adenosyl-L-homocysteine: step 1/1. May play a key role in the regulation of the intracellular concentration of adenosylhomocysteine. The protein is Adenosylhomocysteinase of Xylella fastidiosa (strain M12).